A 534-amino-acid polypeptide reads, in one-letter code: Peptide chain release factor 3 (534 aa).

One can recognise a tr-type G domain in the interval 9–278; sequence ARRRTFAIIS…FFVEHAPPPQ (270 aa). GTP contacts are provided by residues 18–25, 86–90, and 140–143; these read SHPDAGKT, DTPGH, and NKLD.

This sequence belongs to the TRAFAC class translation factor GTPase superfamily. Classic translation factor GTPase family. PrfC subfamily.

The protein resides in the cytoplasm. Increases the formation of ribosomal termination complexes and stimulates activities of RF-1 and RF-2. It binds guanine nucleotides and has strong preference for UGA stop codons. It may interact directly with the ribosome. The stimulation of RF-1 and RF-2 is significantly reduced by GTP and GDP, but not by GMP. This is Peptide chain release factor 3 from Xanthomonas euvesicatoria pv. vesicatoria (strain 85-10) (Xanthomonas campestris pv. vesicatoria).